The sequence spans 445 residues: Signal recognition particle 54 kDa protein (445 aa).

Residues 106-113 (GLQGSGKT), 186-190 (DTAGR), and 244-247 (TKLD) contribute to the GTP site.

The protein belongs to the GTP-binding SRP family. SRP54 subfamily. Part of the signal recognition particle protein translocation system, which is composed of SRP and FtsY. Archaeal SRP consists of a 7S RNA molecule of 300 nucleotides and two protein subunits: SRP54 and SRP19.

The protein localises to the cytoplasm. It catalyses the reaction GTP + H2O = GDP + phosphate + H(+). Functionally, involved in targeting and insertion of nascent membrane proteins into the cytoplasmic membrane. Binds to the hydrophobic signal sequence of the ribosome-nascent chain (RNC) as it emerges from the ribosomes. The SRP-RNC complex is then targeted to the cytoplasmic membrane where it interacts with the SRP receptor FtsY. The protein is Signal recognition particle 54 kDa protein of Methanobrevibacter smithii (strain ATCC 35061 / DSM 861 / OCM 144 / PS).